A 317-amino-acid polypeptide reads, in one-letter code: Flagellar hook-associated protein 3 (317 aa).

It belongs to the bacterial flagellin family.

The protein resides in the secreted. Its subcellular location is the bacterial flagellum. This Escherichia coli (strain K12) protein is Flagellar hook-associated protein 3 (flgL).